A 733-amino-acid polypeptide reads, in one-letter code: Protein psiM (733 aa).

A signal peptide spans 1–26 (MKKINNNKIFVLFLTILLYLLNITTA). 3 N-linked (GlcNAc...) asparagine glycosylation sites follow: Asn-22, Asn-65, and Asn-96. At 27 to 672 (QKPVSINIKI…VCQKAALVST (646 aa)) the chain is on the extracellular side. Residues 114–260 (NYDSDSGNYI…YDYCGVCNGD (147 aa)) form the PA14 domain. N-linked (GlcNAc...) asparagine glycans are attached at residues Asn-277, Asn-336, Asn-379, Asn-428, Asn-471, Asn-537, Asn-573, and Asn-641. Residues 673 to 693 (AVIASVVVVGAVVLGAAIFAG) form a helical membrane-spanning segment. Residues 694 to 733 (KKGYDAWKTSQGNVMAASQANPLYTQSSNGGENPLYNSPT) are Cytoplasmic-facing.

The protein belongs to the prespore-cell-inducing factor family.

The protein localises to the membrane. The protein is Protein psiM (psiM) of Dictyostelium discoideum (Social amoeba).